Reading from the N-terminus, the 179-residue chain is Macro domain-containing protein XAC3343 (179 aa).

One can recognise a Macro domain in the interval 1-175; it reads MRIEVWQGDI…AYQQALATQE (175 aa).

This sequence belongs to the MacroD-type family.

This is Macro domain-containing protein XAC3343 from Xanthomonas axonopodis pv. citri (strain 306).